Here is a 259-residue protein sequence, read N- to C-terminus: Probable metal transport system ATP-binding protein TC_0339 (259 aa).

Positions 9-241 constitute an ABC transporter domain; the sequence is WAVDDLCVNY…AIFQAYGCEL (233 aa). ATP is bound at residue 41–48; the sequence is GPNGAGKS.

This sequence belongs to the ABC transporter superfamily.

It is found in the cell inner membrane. In terms of biological role, part of an ATP-driven transport system TC_0338/TC_0339/TC_0341/TC_0342 for a metal. Probably responsible for energy coupling to the transport system. The protein is Probable metal transport system ATP-binding protein TC_0339 of Chlamydia muridarum (strain MoPn / Nigg).